The sequence spans 1361 residues: DNA-directed RNA polymerase subunit beta'' (1361 aa).

Positions 224, 295, 302, and 305 each coordinate Zn(2+).

The protein belongs to the RNA polymerase beta' chain family. RpoC2 subfamily. In plastids the minimal PEP RNA polymerase catalytic core is composed of four subunits: alpha, beta, beta', and beta''. When a (nuclear-encoded) sigma factor is associated with the core the holoenzyme is formed, which can initiate transcription. Zn(2+) is required as a cofactor.

The protein localises to the plastid. It is found in the chloroplast. It carries out the reaction RNA(n) + a ribonucleoside 5'-triphosphate = RNA(n+1) + diphosphate. In terms of biological role, DNA-dependent RNA polymerase catalyzes the transcription of DNA into RNA using the four ribonucleoside triphosphates as substrates. This is DNA-directed RNA polymerase subunit beta'' from Spinacia oleracea (Spinach).